The chain runs to 285 residues: Anamorsin homolog 1 (285 aa).

The segment at 1 to 150 (MEATVLLVTD…QKPTWETGSS (150 aa)) is N-terminal SAM-like domain. Residues 150 to 195 (SFSLKKKSVQKQESLPKPGALSVKPEMNVDLEDLIDEESLLSEEDL) form a linker region. Residues Cys206, Cys215, Cys218, and Cys220 each contribute to the [2Fe-2S] cluster site. The interval 206–220 (CEVSTKRKACKNCTC) is fe-S binding site A. The [4Fe-4S] cluster site is built by Cys246, Cys249, Cys257, and Cys260. 2 short sequence motifs (cx2C motif) span residues 246–249 (CGNC) and 257–260 (CSSC). The segment at 246–260 (CGNCGLGDAFRCSSC) is fe-S binding site B.

This sequence belongs to the anamorsin family. As to quaternary structure, monomer. [2Fe-2S] cluster is required as a cofactor. The cofactor is [4Fe-4S] cluster.

Its subcellular location is the cytoplasm. It is found in the mitochondrion intermembrane space. Its function is as follows. Component of the cytosolic iron-sulfur (Fe-S) protein assembly (CIA) machinery. Required for the maturation of extramitochondrial Fe-S proteins. Part of an electron transfer chain functioning in an early step of cytosolic Fe-S biogenesis, facilitating the de novo assembly of a [4Fe-4S] cluster on the cytosolic Fe-S scaffold complex. Electrons are transferred from NADPH via a FAD- and FMN-containing diflavin oxidoreductase. Together with the diflavin oxidoreductase, also required for the assembly of the diferric tyrosyl radical cofactor of ribonucleotide reductase (RNR), probably by providing electrons for reduction during radical cofactor maturation in the catalytic small subunit. The protein is Anamorsin homolog 1 of Picea sitchensis (Sitka spruce).